A 567-amino-acid chain; its full sequence is Proline--tRNA ligase (567 aa).

This sequence belongs to the class-II aminoacyl-tRNA synthetase family. ProS type 1 subfamily. Homodimer.

The protein localises to the cytoplasm. The catalysed reaction is tRNA(Pro) + L-proline + ATP = L-prolyl-tRNA(Pro) + AMP + diphosphate. In terms of biological role, catalyzes the attachment of proline to tRNA(Pro) in a two-step reaction: proline is first activated by ATP to form Pro-AMP and then transferred to the acceptor end of tRNA(Pro). As ProRS can inadvertently accommodate and process non-cognate amino acids such as alanine and cysteine, to avoid such errors it has two additional distinct editing activities against alanine. One activity is designated as 'pretransfer' editing and involves the tRNA(Pro)-independent hydrolysis of activated Ala-AMP. The other activity is designated 'posttransfer' editing and involves deacylation of mischarged Ala-tRNA(Pro). The misacylated Cys-tRNA(Pro) is not edited by ProRS. In Streptomyces coelicolor (strain ATCC BAA-471 / A3(2) / M145), this protein is Proline--tRNA ligase.